Here is a 292-residue protein sequence, read N- to C-terminus: Mycothiol acetyltransferase (292 aa).

2 N-acetyltransferase domains span residues 13 to 168 (ALDR…KWLQ) and 159 to 292 (KSVA…VYEK). Residue glutamate 40 participates in 1D-myo-inositol 2-(L-cysteinylamino)-2-deoxy-alpha-D-glucopyranoside binding. Acetyl-CoA is bound at residue 77-79 (LAV). Residues glutamate 179, lysine 218, and glutamate 226 each coordinate 1D-myo-inositol 2-(L-cysteinylamino)-2-deoxy-alpha-D-glucopyranoside. Residues 230-232 (VGL) and 237-243 (RGRGLGD) contribute to the acetyl-CoA site. Residue tyrosine 264 coordinates 1D-myo-inositol 2-(L-cysteinylamino)-2-deoxy-alpha-D-glucopyranoside.

This sequence belongs to the acetyltransferase family. MshD subfamily. Monomer.

The enzyme catalyses 1D-myo-inositol 2-(L-cysteinylamino)-2-deoxy-alpha-D-glucopyranoside + acetyl-CoA = mycothiol + CoA + H(+). Catalyzes the transfer of acetyl from acetyl-CoA to desacetylmycothiol (Cys-GlcN-Ins) to form mycothiol. This chain is Mycothiol acetyltransferase, found in Corynebacterium glutamicum (strain ATCC 13032 / DSM 20300 / JCM 1318 / BCRC 11384 / CCUG 27702 / LMG 3730 / NBRC 12168 / NCIMB 10025 / NRRL B-2784 / 534).